The primary structure comprises 115 residues: NAD(P)H-quinone oxidoreductase subunit M (115 aa).

Belongs to the complex I NdhM subunit family. NDH-1 can be composed of about 15 different subunits; different subcomplexes with different compositions have been identified which probably have different functions.

Its subcellular location is the cellular thylakoid membrane. It catalyses the reaction a plastoquinone + NADH + (n+1) H(+)(in) = a plastoquinol + NAD(+) + n H(+)(out). The enzyme catalyses a plastoquinone + NADPH + (n+1) H(+)(in) = a plastoquinol + NADP(+) + n H(+)(out). NDH-1 shuttles electrons from an unknown electron donor, via FMN and iron-sulfur (Fe-S) centers, to quinones in the respiratory and/or the photosynthetic chain. The immediate electron acceptor for the enzyme in this species is believed to be plastoquinone. Couples the redox reaction to proton translocation, and thus conserves the redox energy in a proton gradient. Cyanobacterial NDH-1 also plays a role in inorganic carbon-concentration. The polypeptide is NAD(P)H-quinone oxidoreductase subunit M (Prochlorococcus marinus (strain SARG / CCMP1375 / SS120)).